Consider the following 282-residue polypeptide: Formamidopyrimidine-DNA glycosylase (282 aa).

P2 (schiff-base intermediate with DNA) is an active-site residue. Catalysis depends on E3, which acts as the Proton donor. Residue K61 is the Proton donor; for beta-elimination activity of the active site. DNA contacts are provided by H93, R112, and K158. Residues 244-278 (DAYGREGEPCRRCGAIMRRDKFMNRSSFYCPRCQP) form an FPG-type zinc finger. R268 serves as the catalytic Proton donor; for delta-elimination activity.

This sequence belongs to the FPG family. Monomer. The cofactor is Zn(2+).

It catalyses the reaction Hydrolysis of DNA containing ring-opened 7-methylguanine residues, releasing 2,6-diamino-4-hydroxy-5-(N-methyl)formamidopyrimidine.. The enzyme catalyses 2'-deoxyribonucleotide-(2'-deoxyribose 5'-phosphate)-2'-deoxyribonucleotide-DNA = a 3'-end 2'-deoxyribonucleotide-(2,3-dehydro-2,3-deoxyribose 5'-phosphate)-DNA + a 5'-end 5'-phospho-2'-deoxyribonucleoside-DNA + H(+). Functionally, involved in base excision repair of DNA damaged by oxidation or by mutagenic agents. Acts as a DNA glycosylase that recognizes and removes damaged bases. Has a preference for oxidized purines, such as 7,8-dihydro-8-oxoguanine (8-oxoG). Has AP (apurinic/apyrimidinic) lyase activity and introduces nicks in the DNA strand. Cleaves the DNA backbone by beta-delta elimination to generate a single-strand break at the site of the removed base with both 3'- and 5'-phosphates. This chain is Formamidopyrimidine-DNA glycosylase, found in Mycolicibacterium gilvum (strain PYR-GCK) (Mycobacterium gilvum (strain PYR-GCK)).